The chain runs to 386 residues: Ferredoxin--NADP reductase (386 aa).

Positions 9 to 67 (SRMFRYEVVGLRQTAETEKTNYAIRNSGSQFFNVPYDRMNQFMQQITRWGGKIVSIQPL) constitute a CpcD-like domain. The FAD-binding FR-type domain occupies 104–228 (NNPCIGKVIS…TGPVGKEMLL (125 aa)). FAD contacts are provided by residues 163-166 (RLYS), 184-186 (CVR), Tyr190, 202-204 (VCS), and Thr243. The NADP(+) site is built by Ser166 and Arg186. Residues Thr243, 275–276 (VA), 305–306 (SR), 315–319 (KMYIQ), 344–345 (GL), and Glu384 each bind NADP(+).

Belongs to the ferredoxin--NADP reductase type 1 family. The cofactor is FAD.

Its subcellular location is the cellular thylakoid membrane. It carries out the reaction 2 reduced [2Fe-2S]-[ferredoxin] + NADP(+) + H(+) = 2 oxidized [2Fe-2S]-[ferredoxin] + NADPH. This chain is Ferredoxin--NADP reductase (petH), found in Thermosynechococcus vestitus (strain NIES-2133 / IAM M-273 / BP-1).